Consider the following 511-residue polypeptide: Bifunctional purine biosynthesis protein PurH (511 aa).

Residues 1–145 (MKRRAIISVS…KNHAYVTAVV (145 aa)) form the MGS-like domain.

This sequence belongs to the PurH family.

The catalysed reaction is (6R)-10-formyltetrahydrofolate + 5-amino-1-(5-phospho-beta-D-ribosyl)imidazole-4-carboxamide = 5-formamido-1-(5-phospho-D-ribosyl)imidazole-4-carboxamide + (6S)-5,6,7,8-tetrahydrofolate. It catalyses the reaction IMP + H2O = 5-formamido-1-(5-phospho-D-ribosyl)imidazole-4-carboxamide. Its pathway is purine metabolism; IMP biosynthesis via de novo pathway; 5-formamido-1-(5-phospho-D-ribosyl)imidazole-4-carboxamide from 5-amino-1-(5-phospho-D-ribosyl)imidazole-4-carboxamide (10-formyl THF route): step 1/1. It functions in the pathway purine metabolism; IMP biosynthesis via de novo pathway; IMP from 5-formamido-1-(5-phospho-D-ribosyl)imidazole-4-carboxamide: step 1/1. The chain is Bifunctional purine biosynthesis protein PurH from Anoxybacillus flavithermus (strain DSM 21510 / WK1).